Here is an 83-residue protein sequence, read N- to C-terminus: UPF0147 protein TK2131 (83 aa).

Belongs to the UPF0147 family.

In Thermococcus kodakarensis (strain ATCC BAA-918 / JCM 12380 / KOD1) (Pyrococcus kodakaraensis (strain KOD1)), this protein is UPF0147 protein TK2131.